A 239-amino-acid polypeptide reads, in one-letter code: Probable phosphatase Csac_1188 (239 aa).

Zn(2+)-binding residues include His-8, His-10, His-16, His-41, Glu-74, His-102, His-132, Asp-192, and His-194.

This sequence belongs to the PHP family. Zn(2+) serves as cofactor.

This chain is Probable phosphatase Csac_1188, found in Caldicellulosiruptor saccharolyticus (strain ATCC 43494 / DSM 8903 / Tp8T 6331).